Reading from the N-terminus, the 345-residue chain is Succinylglutamate desuccinylase (345 aa).

Zn(2+) is bound by residues H63, E66, and H160. Residue E224 is part of the active site.

This sequence belongs to the AspA/AstE family. Succinylglutamate desuccinylase subfamily. It depends on Zn(2+) as a cofactor.

The enzyme catalyses N-succinyl-L-glutamate + H2O = L-glutamate + succinate. Its pathway is amino-acid degradation; L-arginine degradation via AST pathway; L-glutamate and succinate from L-arginine: step 5/5. Functionally, transforms N(2)-succinylglutamate into succinate and glutamate. The protein is Succinylglutamate desuccinylase of Shewanella woodyi (strain ATCC 51908 / MS32).